A 347-amino-acid polypeptide reads, in one-letter code: Epimerase family protein SDR39U1 homolog, chloroplastic (347 aa).

Residues 1–37 (MELLCSPTSLSSSFALSSALLVPRSFSMPGTRRFMVL) constitute a chloroplast transit peptide. Residues 54–57 (TGFI), 76–77 (TR), 115–119 (LAGLP), and R136 contribute to the NADP(+) site.

Can form homodimers. In terms of tissue distribution, expressed in leaves, stems and flower buds.

The protein localises to the plastid. It localises to the chloroplast inner membrane. The protein resides in the chloroplast. Putative NADP-dependent oxidoreductase that acts as a positive regulator of chloroplast division. May play a role at an early stage of the division process. This chain is Epimerase family protein SDR39U1 homolog, chloroplastic, found in Arabidopsis thaliana (Mouse-ear cress).